A 795-amino-acid chain; its full sequence is Phenylalanine--tRNA ligase beta subunit (795 aa).

In terms of domain architecture, tRNA-binding spans 39-148 (AGTFNGVVVG…LDAPIGTDLR (110 aa)). Positions 401-476 (PKVNTVQLRR…RIYGYNSIPN (76 aa)) constitute a B5 domain. Mg(2+) contacts are provided by D454, D460, E463, and E464. One can recognise an FDX-ACB domain in the interval 701-794 (SKFPANRRDL…VKQRFNAELR (94 aa)).

This sequence belongs to the phenylalanyl-tRNA synthetase beta subunit family. Type 1 subfamily. In terms of assembly, tetramer of two alpha and two beta subunits. Mg(2+) is required as a cofactor.

The protein resides in the cytoplasm. It catalyses the reaction tRNA(Phe) + L-phenylalanine + ATP = L-phenylalanyl-tRNA(Phe) + AMP + diphosphate + H(+). The chain is Phenylalanine--tRNA ligase beta subunit (pheT) from Haemophilus influenzae (strain ATCC 51907 / DSM 11121 / KW20 / Rd).